A 368-amino-acid polypeptide reads, in one-letter code: Probable ubiquitin receptor RAD23a (368 aa).

The 77-residue stretch at 1 to 77 folds into the Ubiquitin-like domain; it reads MKLTVKTLKG…GFLVVMLSKS (77 aa). Residues 80–111 are compositionally biased toward low complexity; that stretch reads ASSAGPSSTQPTSTTTSTISSTTLAAPSTTQS. Positions 80-136 are disordered; it reads ASSAGPSSTQPTSTTTSTISSTTLAAPSTTQSIAVPASNSTPVQEQPTAQSDTYGQA. Residues 116-136 show a composition bias toward polar residues; sequence ASNSTPVQEQPTAQSDTYGQA. The UBA 1 domain maps to 142 to 185; sequence SGSSIEQMVQQIMEMGGGSWDKETVTRALRAAYNNPERAVDYLY. The segment at 202–222 is disordered; it reads VGSGRELTAPPPSGGPNSSPL. Residues 239-282 enclose the STI1 domain; that stretch reads GTLEFLRGNDQFQQLRSMVNSNPQILQPMLQELGKQNPQLLRLI. The UBA 2 domain maps to 320–360; sequence VTPEEQESIERLEAMGFDRAIVIEAFLSCDRNEELAANYLL.

The protein belongs to the RAD23 family. Interacts with 'Lys-48'-linked polyubiquitin chains. Interacts with RPN10. Widely expressed in the whole plant.

The protein resides in the nucleus. Its subcellular location is the cytoplasm. In terms of biological role, may be involved in nucleotide excision repair. Binds and presumably selects ubiquitin-conjugates for destruction. Prefers multiubiquitin chains rather than single ubiquitins, with a binding affinity for 'Lys-48'-linked ubiquitin chains. Acts as a ubiquitin receptor that associates with the 26S proteasomal docking subunit RPN10 for the indirect recognition of ubiquitinated substrates of ubiquitin/26S proteasome-mediated proteolysis (UPP). Involved in UV tolerance in roots, specifically in dark conditions. This is Probable ubiquitin receptor RAD23a from Arabidopsis thaliana (Mouse-ear cress).